A 398-amino-acid polypeptide reads, in one-letter code: Vacuolar protease A (398 aa).

Residues 1 to 18 (MKSTSLLTASVLLGSASA) form the signal peptide. Residues 19–70 (AVHKLKLNKVPLDEQLYTHNIDAHVRALGQKYMGIRPNVHQELLEENSLNDM) constitute a propeptide, activation peptide. The Peptidase A1 domain maps to 85–395 (YFSEISLGTP…DLGNNAVGLA (311 aa)). Asp-103 is an active-site residue. Cysteines 116 and 121 form a disulfide. N-linked (GlcNAc...) asparagine glycosylation occurs at Asn-138. Asp-287 is an active-site residue. Cys-321 and Cys-354 are disulfide-bonded. Asn-338 carries N-linked (GlcNAc...) asparagine glycosylation.

This sequence belongs to the peptidase A1 family.

The protein localises to the vacuole lumen. It is found in the secreted. It catalyses the reaction Hydrolysis of proteins with broad specificity for peptide bonds. Cleaves -Leu-Leu-|-Val-Tyr- bond in a synthetic substrate. Does not act on esters of Tyr or Arg.. Functionally, vacuolar aspartic endopeptidase which is probably also secreted and contributes to virulence. The polypeptide is Vacuolar protease A (pep2) (Aspergillus fumigatus (strain ATCC MYA-4609 / CBS 101355 / FGSC A1100 / Af293) (Neosartorya fumigata)).